The sequence spans 401 residues: MRKNQISPYIKTSKIKNFTMNFGPQHPAAHGVLRLILELDGELVRKADPHIGLLHRGTEKLIEYKTYIQALPYFDRLDYVSMMSQEHAYSLAIEKLLNCNVPIRAQYIRVIYSELTRILNHILAVTTHAMDVGALTPFLWLFEEREKLMEFYERVSGARMHAAYIRPGGVAQDFPLGLWNDIMQFVEQFFWRLVEVEELLNGNRIWKQRLVDVGIVTAEEALSHGFSGVMLRGSGIAWDLRKNNPYEVYNKLNFNIPIGKNGDCYDRYLIRVYEMYESLNIIKQCLTAMPAGLIKVNDKKITPPERTDMKYSMESLIHHFKLYSEGFNVPENETYACVEAPKGEFGVYVVSDGSNKPYRCKIKAPGFLHLQSLNSMSKGHMIADVVTIIGTQDIVFGEIDR.

The protein belongs to the complex I 49 kDa subunit family.

The protein localises to the mitochondrion. The catalysed reaction is a ubiquinone + NADH + 5 H(+)(in) = a ubiquinol + NAD(+) + 4 H(+)(out). Its function is as follows. Core subunit of the mitochondrial membrane respiratory chain NADH dehydrogenase (Complex I) that is believed to belong to the minimal assembly required for catalysis. Complex I functions in the transfer of electrons from NADH to the respiratory chain. The immediate electron acceptor for the enzyme is believed to be ubiquinone. Component of the iron-sulfur (IP) fragment of the enzyme. The chain is NADH-ubiquinone oxidoreductase 49 kDa subunit (NAD7) from Acanthamoeba castellanii (Amoeba).